The following is a 1486-amino-acid chain: Chromosome partition protein MukB (1486 aa).

ATP is bound at residue 34 to 41 (GGNGAGKS). Coiled-coil stretches lie at residues 326–418 (LEAD…QYNQ), 444–480 (LETF…QAYQ), and 509–603 (RHLA…RAPV). The flexible hinge stretch occupies residues 666–783 (PGGSEDQRLN…EVPLFGRAAR (118 aa)). 3 coiled-coil regions span residues 835–923 (EAEI…AKLE), 977–1115 (EMLS…TAKA), and 1209–1266 (VEAI…QNVS).

It belongs to the SMC family. MukB subfamily. Homodimerization via its hinge domain. Binds to DNA via its C-terminal region. Interacts, and probably forms a ternary complex, with MukE and MukF via its C-terminal region. The complex formation is stimulated by calcium or magnesium. Interacts with tubulin-related protein FtsZ.

It is found in the cytoplasm. It localises to the nucleoid. In terms of biological role, plays a central role in chromosome condensation, segregation and cell cycle progression. Functions as a homodimer, which is essential for chromosome partition. Involved in negative DNA supercoiling in vivo, and by this means organize and compact chromosomes. May achieve or facilitate chromosome segregation by condensation DNA from both sides of a centrally located replisome during cell division. In Shigella boydii serotype 18 (strain CDC 3083-94 / BS512), this protein is Chromosome partition protein MukB.